The chain runs to 245 residues: tRNA pseudouridine synthase A (245 aa).

The active-site Nucleophile is the aspartate 52. Tyrosine 111 is a substrate binding site.

This sequence belongs to the tRNA pseudouridine synthase TruA family. In terms of assembly, homodimer.

It carries out the reaction uridine(38/39/40) in tRNA = pseudouridine(38/39/40) in tRNA. Formation of pseudouridine at positions 38, 39 and 40 in the anticodon stem and loop of transfer RNAs. In Rhodopseudomonas palustris (strain BisB5), this protein is tRNA pseudouridine synthase A.